A 434-amino-acid polypeptide reads, in one-letter code: Histidinol dehydrogenase (434 aa).

Residues Y130, Q188, and N211 each contribute to the NAD(+) site. Positions 237, 259, and 262 each coordinate substrate. Q259 and H262 together coordinate Zn(2+). Residues E326 and H327 each act as proton acceptor in the active site. Residues H327, D360, E414, and H419 each contribute to the substrate site. Zn(2+) is bound at residue D360. H419 is a binding site for Zn(2+).

This sequence belongs to the histidinol dehydrogenase family. In terms of assembly, homodimer. It depends on Zn(2+) as a cofactor.

The catalysed reaction is L-histidinol + 2 NAD(+) + H2O = L-histidine + 2 NADH + 3 H(+). The protein operates within amino-acid biosynthesis; L-histidine biosynthesis; L-histidine from 5-phospho-alpha-D-ribose 1-diphosphate: step 9/9. Functionally, catalyzes the sequential NAD-dependent oxidations of L-histidinol to L-histidinaldehyde and then to L-histidine. This chain is Histidinol dehydrogenase, found in Salmonella choleraesuis (strain SC-B67).